A 270-amino-acid chain; its full sequence is 4-hydroxy-tetrahydrodipicolinate reductase (270 aa).

NAD(+) is bound by residues 11-16 (GAGGRM) and glutamate 37. Arginine 38 contributes to the NADP(+) binding site. NAD(+)-binding positions include 101-103 (GTT) and 125-128 (APNM). Histidine 158 serves as the catalytic Proton donor/acceptor. Histidine 159 lines the (S)-2,3,4,5-tetrahydrodipicolinate pocket. Lysine 162 serves as the catalytic Proton donor. 168–169 (GT) serves as a coordination point for (S)-2,3,4,5-tetrahydrodipicolinate.

The protein belongs to the DapB family.

It localises to the cytoplasm. The catalysed reaction is (S)-2,3,4,5-tetrahydrodipicolinate + NAD(+) + H2O = (2S,4S)-4-hydroxy-2,3,4,5-tetrahydrodipicolinate + NADH + H(+). It carries out the reaction (S)-2,3,4,5-tetrahydrodipicolinate + NADP(+) + H2O = (2S,4S)-4-hydroxy-2,3,4,5-tetrahydrodipicolinate + NADPH + H(+). The protein operates within amino-acid biosynthesis; L-lysine biosynthesis via DAP pathway; (S)-tetrahydrodipicolinate from L-aspartate: step 4/4. Functionally, catalyzes the conversion of 4-hydroxy-tetrahydrodipicolinate (HTPA) to tetrahydrodipicolinate. The sequence is that of 4-hydroxy-tetrahydrodipicolinate reductase from Shewanella oneidensis (strain ATCC 700550 / JCM 31522 / CIP 106686 / LMG 19005 / NCIMB 14063 / MR-1).